Consider the following 401-residue polypeptide: Exodeoxyribonuclease 7 large subunit (401 aa).

The protein belongs to the XseA family. As to quaternary structure, heterooligomer composed of large and small subunits.

The protein localises to the cytoplasm. It carries out the reaction Exonucleolytic cleavage in either 5'- to 3'- or 3'- to 5'-direction to yield nucleoside 5'-phosphates.. In terms of biological role, bidirectionally degrades single-stranded DNA into large acid-insoluble oligonucleotides, which are then degraded further into small acid-soluble oligonucleotides. This chain is Exodeoxyribonuclease 7 large subunit, found in Clostridium botulinum (strain Langeland / NCTC 10281 / Type F).